Consider the following 352-residue polypeptide: Dihydrorhizobitoxine desaturase (352 aa).

3 consecutive transmembrane segments (helical) span residues 53–73 (LATL…IGAY), 89–109 (LAKN…YPLF), and 204–224 (IGIL…LFWI).

The protein belongs to the fatty acid desaturase type 1 family.

It localises to the cell inner membrane. It carries out the reaction dihydrorhizobitoxine + 2 reduced [2Fe-2S]-[ferredoxin] + O2 + 2 H(+) = rhizobitoxine + 2 oxidized [2Fe-2S]-[ferredoxin] + 2 H2O. Involved in the biosynthesis of the nodulation enhancer compound rhizobitoxine. Catalyzes the final step of the pathway, the introduction of a carbon double bond into the C3 position of dihydrorhizobitoxine to produce rhizobitoxine. This chain is Dihydrorhizobitoxine desaturase, found in Bradyrhizobium elkanii.